The sequence spans 460 residues: MATGKIVQVIGAVVDVEFPQDAVPRVYDALEVQNGNEHLVLEVQQQLGGGIVRTIAMGSSDGLRRGLDVKDLEHPIEVPVGKATLGRIMNVLGEPVDMKGEIGEEERWAIHRAAPSYEELSNSQELLETGIKVIDLMCPFAKGGKVGLFGGAGVGKTVNMMELIRNIAIEHSGYSVFAGVGERTREGNDFYHEMTDSNVIDKVSLVYGQMNEPPGNRLRVALTGLTMAEKFRDEGRDVLLFVDNIYRYTLAGTEVSALLGRMPSAVGYQPTLAEEMGVLQERITSTKTGSITSVQAVYVPADDLTDPSPATTFAHLDATVVLSRQIASLGIYPAVDPLDSTSRQLDPLVVGQEHYDTARGVQSILQRYQELKDIIAILGMDELSEEDKLVVARARKIQRFLSQPFFVAEVFTGSPGKYVSLKDTIRGFKGIMEGEYDHLPEQAFYMVGSIDEAVEKAKKL.

An ATP-binding site is contributed by 150-157 (GGAGVGKT).

Belongs to the ATPase alpha/beta chains family. As to quaternary structure, F-type ATPases have 2 components, CF(1) - the catalytic core - and CF(0) - the membrane proton channel. CF(1) has five subunits: alpha(3), beta(3), gamma(1), delta(1), epsilon(1). CF(0) has three main subunits: a(1), b(2) and c(9-12). The alpha and beta chains form an alternating ring which encloses part of the gamma chain. CF(1) is attached to CF(0) by a central stalk formed by the gamma and epsilon chains, while a peripheral stalk is formed by the delta and b chains.

The protein localises to the cell inner membrane. It carries out the reaction ATP + H2O + 4 H(+)(in) = ADP + phosphate + 5 H(+)(out). Produces ATP from ADP in the presence of a proton gradient across the membrane. The catalytic sites are hosted primarily by the beta subunits. The chain is ATP synthase subunit beta from Citrobacter koseri (strain ATCC BAA-895 / CDC 4225-83 / SGSC4696).